Consider the following 762-residue polypeptide: Chondroadherin-like protein (762 aa).

The signal sequence occupies residues 1–30 (MEGPRSSTHVPLVLPLLVLLLLAPARQAAA). Residues 31 to 62 (QRCPQACICDNSRRHVACRYQNLTEVPDAIPE) enclose the LRRNT 1 domain. Residue Asn52 is glycosylated (N-linked (GlcNAc...) asparagine). LRR repeat units lie at residues 87-108 (HLTH…AFRG), 111-132 (RLLL…ALDG), 135-156 (SLRR…TFGA), 159-180 (ALAT…AFQG), 183-204 (RVRW…ALAG), 207-228 (ALRR…VLSQ), 231-252 (GLAR…DGLA), 255-276 (GLRE…AFAH), and 279-300 (RLHT…QGPG). The region spanning 310-359 (NPLWCGCQARPLLEWLARARVRSDGACQGPRRLRGEALDALRPWDLRCPG) is the LRRCT 1 domain. Positions 364-390 (EEEELEERAVAGPRAPPRGPPRGPGEE) are disordered. Pro residues predominate over residues 377-386 (RAPPRGPPRG). Residues 387–425 (PGEERAVAPCPRACVCVPESRHSSCEGCGLQAVPRGFPS) form the LRRNT 2 domain. Cys396 and Cys411 are disulfide-bonded. LRR repeat units follow at residues 426 to 447 (DTQL…AFPG), 450 to 471 (HLVS…ALAG), 474 to 495 (RLIY…ALEG), 498 to 519 (RLGY…ALRA), 522 to 543 (SLFS…DLGR), 546 to 566 (ALRW…GALG), 570 to 591 (ELEK…ALEG), 594 to 615 (ALLE…AFQP), 619 to 640 (SLQH…AFSG), and 644 to 665 (GLQS…PSLS). A glycan (N-linked (GlcNAc...) asparagine) is linked at Asn626. Residues 675-724 (NPFHCDCQLLPLHRWLTGLNLRVGATCATPPNARGQRVKAAAAVFEDCPG) form the LRRCT 2 domain. Disulfide bonds link Cys679/Cys722 and Cys681/Cys701. Residues 728 to 745 (RKAKRTPASRPSARRTPI) are compositionally biased toward basic residues. The disordered stretch occupies residues 728-762 (RKAKRTPASRPSARRTPIKGRQCGADKVGKEKGRL).

This sequence belongs to the small leucine-rich proteoglycan (SLRP) family. SLRP class IV subfamily. In terms of assembly, associates with collagen and binds to collagen fibrils.

The protein localises to the secreted. The protein resides in the extracellular space. It localises to the extracellular matrix. In terms of biological role, potential negative modulator of chondrocyte differentiation. Inhibits collagen fibrillogenesis in vitro. May influence chondrocyte's differentiation by acting on its cellular collagenous microenvironment. The protein is Chondroadherin-like protein (CHADL) of Homo sapiens (Human).